A 449-amino-acid polypeptide reads, in one-letter code: Putative glycosyltransferase 7 (449 aa).

Residues 1 to 32 (MVSPETSSSHYQSSPMAKYAGTRTRPVVCISD) lie on the Cytoplasmic side of the membrane. A helical; Signal-anchor for type II membrane protein transmembrane segment spans residues 33–53 (VVLFLGGAFMSLILVWSFFSF). Residues 54–449 (SSISPNLTVK…VPFDYPDEPW (396 aa)) are Lumenal-facing. N-linked (GlcNAc...) asparagine glycans are attached at residues Asn59, Asn123, and Asn332.

Belongs to the glycosyltransferase 34 family.

The protein resides in the golgi apparatus membrane. In terms of biological role, probable glycosyltransferase that may be involved in the biosynthesis of xyloglucan. The sequence is that of Putative glycosyltransferase 7 (GT7) from Arabidopsis thaliana (Mouse-ear cress).